The primary structure comprises 359 residues: HTH-type transcriptional regulator Rv3575c (359 aa).

The HTH lacI-type domain maps to 9–64; sequence ATLASLAAELKVSRTTVSNAFNRPDQLSADLRERVLATAKRLGYAGPDPVARSLRT. The H-T-H motif DNA-binding region spans 11-30; the sequence is LASLAAELKVSRTTVSNAFN.

Transcriptional regulator that negatively regulates transcription of the mce4 operon, which is involved in cholesterol transport and utilization. Acts by binding to the promoter region of the mce4 operon. It affects the utilization of host cholesterol as a carbon source, impacting the host's innate immune response. This Mycobacterium tuberculosis (strain ATCC 25618 / H37Rv) protein is HTH-type transcriptional regulator Rv3575c.